The chain runs to 245 residues: Cysteine-rich secretory protein 3 (245 aa).

The first 20 residues, 1–20 (MTLFPVLLFLVAGLLPSFPA), serve as a signal peptide directing secretion. Positions 43 to 171 (VNKHNELRRA…VLKYYYVCQY (129 aa)) constitute an SCP domain. Intrachain disulfides connect C191–C198, C194–C203, C207–C240, C216–C234, and C225–C238. The ShKT domain maps to 207-240 (CKYEDLYSNCKSLKLTLTCKHQLVRDSCKASCNC). N-linked (GlcNAc...) asparagine glycosylation occurs at N239.

The protein belongs to the CRISP family. As to quaternary structure, interacts with A1BG. Salivary gland, pancreas and prostate &gt; epididymis, ovary, thymus and colon.

The protein resides in the secreted. The chain is Cysteine-rich secretory protein 3 (CRISP3) from Homo sapiens (Human).